The chain runs to 311 residues: RNA polymerase sigma factor SigA4 (311 aa).

Residues 78–148 (MLKANLRLVV…TRAIDNHART (71 aa)) form a sigma-70 factor domain-2 region. Residues 102-105 (DLIQ) carry the Interaction with polymerase core subunit RpoC motif. Positions 157 to 234 (EKISRIKKMT…DPKSLEPMDA (78 aa)) are sigma-70 factor domain-3. Positions 247–304 (WLAHLTEREQQVLQLRFGLHDGEQHTLAEIGRRLNVSRERIRQVEARALQKLRVLSQQ) are sigma-70 factor domain-4. Positions 273–292 (LAEIGRRLNVSRERIRQVEA) form a DNA-binding region, H-T-H motif.

The protein belongs to the sigma-70 factor family.

The protein localises to the cytoplasm. Functionally, sigma factors are initiation factors that promote the attachment of RNA polymerase to specific initiation sites and are then released. This chain is RNA polymerase sigma factor SigA4 (sigA4), found in Synechococcus elongatus (strain ATCC 33912 / PCC 7942 / FACHB-805) (Anacystis nidulans R2).